A 521-amino-acid polypeptide reads, in one-letter code: Bifunctional purine biosynthesis protein PurH (521 aa).

The region spanning 1–150 is the MGS-like domain; it reads MSEDRKAIKR…KNHPSVAVVT (150 aa).

This sequence belongs to the PurH family.

The catalysed reaction is (6R)-10-formyltetrahydrofolate + 5-amino-1-(5-phospho-beta-D-ribosyl)imidazole-4-carboxamide = 5-formamido-1-(5-phospho-D-ribosyl)imidazole-4-carboxamide + (6S)-5,6,7,8-tetrahydrofolate. It carries out the reaction IMP + H2O = 5-formamido-1-(5-phospho-D-ribosyl)imidazole-4-carboxamide. Its pathway is purine metabolism; IMP biosynthesis via de novo pathway; 5-formamido-1-(5-phospho-D-ribosyl)imidazole-4-carboxamide from 5-amino-1-(5-phospho-D-ribosyl)imidazole-4-carboxamide (10-formyl THF route): step 1/1. It functions in the pathway purine metabolism; IMP biosynthesis via de novo pathway; IMP from 5-formamido-1-(5-phospho-D-ribosyl)imidazole-4-carboxamide: step 1/1. In Corynebacterium efficiens (strain DSM 44549 / YS-314 / AJ 12310 / JCM 11189 / NBRC 100395), this protein is Bifunctional purine biosynthesis protein PurH.